We begin with the raw amino-acid sequence, 128 residues long: NHP2-like protein 1 (128 aa).

The tract at residues 36-48 is interaction with U4 snRNA and U4atac snRNA; that stretch reads RKGANEATKTLNR. The tract at residues 96–128 is important for U4 snRNA-binding; it reads SRPVIACAVTIKEGSQLKPQIQSLQQSIERLLV.

Belongs to the eukaryotic ribosomal protein eL8 family. In terms of assembly, identified in the spliceosome B complex. Component of the U4/U6-U5 tri-snRNP complex. Part of the small subunit (SSU) processome, composed of more than 70 proteins and the RNA chaperone small nucleolar RNA (snoRNA) U3.

It is found in the nucleus. The protein localises to the nucleolus. Functionally, part of the small subunit (SSU) processome, first precursor of the small eukaryotic ribosomal subunit. During the assembly of the SSU processome in the nucleolus, many ribosome biogenesis factors, an RNA chaperone and ribosomal proteins associate with the nascent pre-rRNA and work in concert to generate RNA folding, modifications, rearrangements and cleavage as well as targeted degradation of pre-ribosomal RNA by the RNA exosome. Involved in pre-mRNA splicing as component of the spliceosome. Binds to the 5'-stem-loop of U4 snRNA and thereby contributes to spliceosome assembly. The protein undergoes a conformational change upon RNA-binding. Core component of box C/D small nucleolar ribonucleoprotein (snoRNP) complexes that function in methylation of multiple sites on ribosomal RNAs (rRNAs) and messenger RNAs (mRNAs). This Xenopus tropicalis (Western clawed frog) protein is NHP2-like protein 1.